We begin with the raw amino-acid sequence, 500 residues long: Protein SLENDER RICE1-LIKE 2 (500 aa).

The GRAS domain occupies 68–454 (KELEKMALRS…QRLYSASAWR (387 aa)). The leucine repeat I (LRI) stretch occupies residues 75–135 (LRSVNLMVTC…DALAERLFPA (61 aa)). Residues 154–219 (FRGFYEAGPY…GGPPFLRITG (66 aa)) are VHIID. Positions 185-189 (VHVID) match the VHIID motif. The interval 233–265 (DVGLRLAEFARSCSVPFAFRGIAADQLDGLRPW) is leucine repeat II (LRII). A PFYRE region spans residues 275 to 376 (VAINSVLQLH…EAYLQGEIAD (102 aa)). The LXXLL motif signature appears at 283-287 (LHRLL). The interval 379 to 454 (SREGSSRVER…QRLYSASAWR (76 aa)) is SAW. The tract at residues 466–500 (SGAADAMEESQNSNTNGGGGGSSGGGHGALNQIMQ) is disordered. Residues 481 to 493 (NGGGGGSSGGGHG) are compositionally biased toward gly residues.

It belongs to the GRAS family. As to expression, expressed at low levels in leaf blades, leaf sheaths, rachis and flowers. Expressed in the embryo of immature seeds.

It is found in the nucleus. Its function is as follows. Probable transcriptional regulator that acts as a repressor of the gibberellin (GA) signaling pathway. Its repressive activity is weaker than that of SLR1. Its overexpression prevents the GA signaling pathway and induces a dwarf phenotype in Arabidopsis thaliana plants. The protein is Protein SLENDER RICE1-LIKE 2 of Oryza sativa subsp. japonica (Rice).